The following is a 327-amino-acid chain: Biotin synthase (327 aa).

A Radical SAM core domain is found at 49–282 (FNKEKIDLCS…NKVIRLCGGR (234 aa)). 3 residues coordinate [4Fe-4S] cluster: Cys67, Cys71, and Cys74. [2Fe-2S] cluster contacts are provided by Ser110, Cys142, Cys201, and Arg277.

The protein belongs to the radical SAM superfamily. Biotin synthase family. In terms of assembly, homodimer. Requires [4Fe-4S] cluster as cofactor. [2Fe-2S] cluster is required as a cofactor.

It carries out the reaction (4R,5S)-dethiobiotin + (sulfur carrier)-SH + 2 reduced [2Fe-2S]-[ferredoxin] + 2 S-adenosyl-L-methionine = (sulfur carrier)-H + biotin + 2 5'-deoxyadenosine + 2 L-methionine + 2 oxidized [2Fe-2S]-[ferredoxin]. Its pathway is cofactor biosynthesis; biotin biosynthesis; biotin from 7,8-diaminononanoate: step 2/2. In terms of biological role, catalyzes the conversion of dethiobiotin (DTB) to biotin by the insertion of a sulfur atom into dethiobiotin via a radical-based mechanism. The chain is Biotin synthase from Methanococcus maripaludis (strain DSM 14266 / JCM 13030 / NBRC 101832 / S2 / LL).